A 68-amino-acid chain; its full sequence is Peptide Hp1412 (68 aa).

The first 23 residues, 1-23 (MKTHFAIFLITLFLFQMFSQSDA), serve as a signal peptide directing secretion. Residue Cys36 is modified to Cysteine amide. Positions 40 to 68 (GLSDLYDLDEMFDGEISQADIDFLKELMR) are excised as a propeptide.

Belongs to the non-disulfide-bridged peptide (NDBP) superfamily. Short antimicrobial peptide (group 4) family. As to expression, expressed by the venom gland.

The protein localises to the secreted. Its subcellular location is the target cell membrane. Amphipathic peptide with antimicrobial activity. The protein is Peptide Hp1412 of Heterometrus petersii (Asian forest scorpion).